Consider the following 566-residue polypeptide: 5'-AMP-activated protein kinase subunit gamma-2 (566 aa).

The disordered stretch occupies residues 1–198 (MGSAAMDTKK…SRIYASSSPP (198 aa)). Positions 15–25 (SSPGGSSGKKN) are enriched in low complexity. Residues 54–64 (NSEKHSSRKVD) show a composition bias toward basic and acidic residues. 9 positions are modified to phosphoserine: S65, S71, S73, S90, S138, S143, S158, S161, and S162. Composition is skewed to low complexity over residues 132 to 144 (KESS…STSP) and 156 to 172 (TSSV…VTKQ). T165 carries the post-translational modification Phosphothreonine. A compositionally biased stretch (basic and acidic residues) spans 180-189 (YKQEPERPES). Phosphoserine is present on S196. CBS domains follow at residues 272 to 332 (PTSS…KSPM), 354 to 412 (TFKP…MSDM), and 427 to 489 (IGTY…NLDI). ADP is bound by residues R299, 314 to 319 (MLTITD), V359, 380 to 381 (HR), and K399. AMP-binding positions include R299, 314–319 (MLTITD), V359, H380, 380–381 (HR), K399, T429, A434, 455–456 (SA), 471–474 (SKFD), R498, H527, 527–528 (HR), and 543–546 (SLSD). ATP is bound by residues R299, 314-319 (MLTITD), V359, 380-381 (HR), R381, and K399. The short motif at 367–388 (LFDAVYSLIKNKIHRLPVIDPI) is the AMPK pseudosubstrate element. ADP is bound by residues 471 to 474 (SKFD), R498, and 527 to 528 (HR). ATP is bound by residues 471–474 (SKFD), R498, and 527–528 (HR). The region spanning 501-559 (YFEGVVKCSKLETLETIVDRIVRAEVHRLVVVNEADSIVGIISLSDILQALILTPAGAK) is the CBS 4 domain.

Belongs to the 5'-AMP-activated protein kinase gamma subunit family. In terms of assembly, AMPK is a heterotrimer of an alpha catalytic subunit (PRKAA1 or PRKAA2), a beta (PRKAB1 or PRKAB2) and a gamma non-catalytic subunits (PRKAG1, PRKAG2 or PRKAG3). Interacts with FNIP1 and FNIP2. In terms of processing, phosphorylated by ULK1; leading to negatively regulate AMPK activity and suggesting the existence of a regulatory feedback loop between ULK1 and AMPK. Post-translationally, glycosylated; O-GlcNAcylated by OGT, promoting the AMP-activated protein kinase (AMPK) activity.

Its function is as follows. AMP/ATP-binding subunit of AMP-activated protein kinase (AMPK), an energy sensor protein kinase that plays a key role in regulating cellular energy metabolism. In response to reduction of intracellular ATP levels, AMPK activates energy-producing pathways and inhibits energy-consuming processes: inhibits protein, carbohydrate and lipid biosynthesis, as well as cell growth and proliferation. AMPK acts via direct phosphorylation of metabolic enzymes, and by longer-term effects via phosphorylation of transcription regulators. Also acts as a regulator of cellular polarity by remodeling the actin cytoskeleton; probably by indirectly activating myosin. Gamma non-catalytic subunit mediates binding to AMP, ADP and ATP, leading to activate or inhibit AMPK: AMP-binding results in allosteric activation of alpha catalytic subunit (PRKAA1 or PRKAA2) both by inducing phosphorylation and preventing dephosphorylation of catalytic subunits. ADP also stimulates phosphorylation, without stimulating already phosphorylated catalytic subunit. ATP promotes dephosphorylation of catalytic subunit, rendering the AMPK enzyme inactive. In Mus musculus (Mouse), this protein is 5'-AMP-activated protein kinase subunit gamma-2 (Prkag2).